Consider the following 371-residue polypeptide: MGKHTAIFDLHRSAGARLVDFAGWDMPLHYGSQVAEHQAVRQGVGIFDVSHMTVIELKGEKVRPFLHQLLANNVDRLTVPGTALYSCMLNTEGGVIDDLIVYLMAEQEFRVVSNAGTRDKVLAWIESHAAPFKVQVEERPELAMIAVQGPEARAQVHGQLPESLKEKVVNLKRFQATWEEGLFVARTGYTGEDGYELLLSGSQAQDWWRRLQAGGAKPCGLGARDTLRLEAGMCLYGADMDETTTPLESGLGWTVAWKPPERDFIGRAVLEAQQAAGCPHQQVGLLLQGKGLMRNGQTITTNLGEGVVTSGGFSPSLERSIALARVPVGADGPCEVQIRGRAVPAAMVKPPFVRNGRACVPAELMEPIEVS.

The protein belongs to the GcvT family. As to quaternary structure, the glycine cleavage system is composed of four proteins: P, T, L and H.

The catalysed reaction is N(6)-[(R)-S(8)-aminomethyldihydrolipoyl]-L-lysyl-[protein] + (6S)-5,6,7,8-tetrahydrofolate = N(6)-[(R)-dihydrolipoyl]-L-lysyl-[protein] + (6R)-5,10-methylene-5,6,7,8-tetrahydrofolate + NH4(+). Functionally, the glycine cleavage system catalyzes the degradation of glycine. This chain is Aminomethyltransferase, found in Nitrosococcus oceani (strain ATCC 19707 / BCRC 17464 / JCM 30415 / NCIMB 11848 / C-107).